A 93-amino-acid polypeptide reads, in one-letter code: C-C motif chemokine 14 (93 aa).

The first 19 residues, 1–19 (MKISVAAIPFFLLITIALG), serve as a signal peptide directing secretion. The O-linked (GalNAc...) serine; partial glycan is linked to S26. Disulfide bonds link C35/C59 and C36/C75.

It belongs to the intercrine beta (chemokine CC) family. The N-terminal processed forms HCC-1(3-74), HCC-1(4-74) and HCC-1(9-74) are produced in small amounts by proteolytic cleavage after secretion in blood. In terms of processing, HCC-1(1-74), but not HCC-1(3-74) and HCC-1(4-74), is partially O-glycosylated; the O-linked glycan consists of one Gal-GalNAc disaccharide, further modified by two N-acetylneuraminic acids. In terms of tissue distribution, expressed constitutively in several normal tissues: spleen, liver, skeletal and heart muscle, gut, and bone marrow, present at high concentrations (1-80 nM) in plasma.

The protein localises to the secreted. Has weak activities on human monocytes and acts via receptors that also recognize MIP-1 alpha. It induces intracellular Ca(2+) changes and enzyme release, but no chemotaxis, at concentrations of 100-1,000 nM, and is inactive on T-lymphocytes, neutrophils, and eosinophil leukocytes. Enhances the proliferation of CD34 myeloid progenitor cells. The processed form HCC-1(9-74) is a chemotactic factor that attracts monocytes, eosinophils, and T-cells and is a ligand for CCR1, CCR3 and CCR5. This is C-C motif chemokine 14 (CCL14) from Homo sapiens (Human).